Reading from the N-terminus, the 345-residue chain is MTYTASVVGGSGFTGGELLRLLDGHPEFELAQATSRSKENKTIGHSHPNLRHSDLRFSSPEDLESVDVLFAATPHGVSMEQIDAFQEAAGTVVDLSADFRLESEAQYDEWYDGHTRPKLLEQSEYALPELNRDNLEGADLIASGGCNATATILGLLPLFEADILSGDEQIVVDVKVGSSEGGAGGGEASSHPERSGVVRPYAPTGHRHEAEIQQFLGIDVSFTVHAVDMIRGASATCHVFPEQRVSKGDLWGAYRGEYEDEPFVELVAGGGGVYRYPEPKSVAGTNRAEVGFELDPGNKRLVVFSAIDNMMKGSAGQAVHAANVALGIEETAGLEFQGLHPVGAP.

11-14 (SGFT) contacts NADP(+). The interval 34 to 56 (TSRSKENKTIGHSHPNLRHSDLR) is disordered. Cysteine 146 is an active-site residue. Asparagine 309 provides a ligand contact to NADP(+).

This sequence belongs to the NAGSA dehydrogenase family. Type 1 subfamily. LysY sub-subfamily.

It is found in the cytoplasm. The catalysed reaction is [amino-group carrier protein]-C-terminal-N-(1-carboxy-5-oxopentan-1-yl)-L-glutamine + phosphate + NADP(+) = [amino-group carrier protein]-C-terminal-N-(1-carboxy-5-phosphooxy-5-oxopentan-1-yl)-L-glutamine + NADPH + H(+). It carries out the reaction [amino-group carrier protein]-C-terminal-gamma-(L-glutamyl-5-semialdehyde)-L-glutamate + phosphate + NADP(+) = [amino-group carrier protein]-C-terminal-gamma-(5-phospho-L-glutamyl)-L-glutamate + NADPH + H(+). The protein operates within amino-acid biosynthesis; L-lysine biosynthesis via AAA pathway; L-lysine from L-alpha-aminoadipate (Thermus route): step 3/5. It functions in the pathway amino-acid biosynthesis; L-arginine biosynthesis. Functionally, involved in both the arginine and lysine biosynthetic pathways. In Haloarcula marismortui (strain ATCC 43049 / DSM 3752 / JCM 8966 / VKM B-1809) (Halobacterium marismortui), this protein is Putative [LysW]-L-2-aminoadipate/[LysW]-L-glutamate phosphate reductase.